A 111-amino-acid polypeptide reads, in one-letter code: MFKATARYIRVQPRKARLAAGLMRNRSVVEAQQQLSFSQMKAGRCLKKVLDSAVANAESNENVKRENLCVVEVRVDAGPMFKRVKSKSRGGRAPVLKRTSHLTVIVGERGQ.

It belongs to the universal ribosomal protein uL22 family. Part of the 50S ribosomal subunit.

In terms of biological role, this protein binds specifically to 23S rRNA; its binding is stimulated by other ribosomal proteins, e.g. L4, L17, and L20. It is important during the early stages of 50S assembly. It makes multiple contacts with different domains of the 23S rRNA in the assembled 50S subunit and ribosome. Its function is as follows. The globular domain of the protein is located near the polypeptide exit tunnel on the outside of the subunit, while an extended beta-hairpin is found that lines the wall of the exit tunnel in the center of the 70S ribosome. In Chlamydia muridarum (strain MoPn / Nigg), this protein is Large ribosomal subunit protein uL22.